The primary structure comprises 439 residues: Large ribosomal subunit protein mL44 (439 aa).

Disordered regions lie at residues 39-73 and 247-282; these read QSTAALAQHDASHDLNNDRFPPLEPLPPAAESLPS and KAMEEQDQDKTPDEEEAEMVANEQDQDVSYDRYGNP. Residues 247–257 are compositionally biased toward basic and acidic residues; the sequence is KAMEEQDQDKT. The segment covering 258–274 has biased composition (acidic residues); sequence PDEEEAEMVANEQDQDV.

This sequence belongs to the ribonuclease III family. Mitochondrion-specific ribosomal protein mL44 subfamily. In terms of assembly, component of the mitochondrial large ribosomal subunit (mt-LSU). Mature N.crassa 74S mitochondrial ribosomes consist of a small (37S) and a large (54S) subunit. The 37S small subunit contains a 16S ribosomal RNA (16S mt-rRNA) and 32 different proteins. The 54S large subunit contains a 23S rRNA (23S mt-rRNA) and 42 different proteins. mL44 forms a heterodimer with mL57 and stabilizes rRNA expansion segments 1/2 at a membrane-facing protuberance close to the point of attachment of the ribosome to the translocon in the membrane.

The protein localises to the mitochondrion. Component of the mitochondrial ribosome (mitoribosome), a dedicated translation machinery responsible for the synthesis of mitochondrial genome-encoded proteins, including at least some of the essential transmembrane subunits of the mitochondrial respiratory chain. The mitoribosomes are attached to the mitochondrial inner membrane and translation products are cotranslationally integrated into the membrane. The sequence is that of Large ribosomal subunit protein mL44 (mrpl3) from Neurospora crassa (strain ATCC 24698 / 74-OR23-1A / CBS 708.71 / DSM 1257 / FGSC 987).